A 410-amino-acid chain; its full sequence is DNA primase small subunit (410 aa).

Residues glutamate 43, aspartate 106, and aspartate 108 contribute to the active site. The short motif at 118 to 129 (CCKDATVCPKCW) is the Zinc knuckle motif element.

It belongs to the eukaryotic-type primase small subunit family. In terms of assembly, heterodimer of a small subunit and a large subunit.

DNA primase is the polymerase that synthesizes small RNA primers for the Okazaki fragments made during discontinuous DNA replication. This is DNA primase small subunit (pri-1) from Caenorhabditis elegans.